The primary structure comprises 261 residues: Zaragozic acid A biosynthesis cluster protein 8 (261 aa).

Over residues 242 to 254 the composition is skewed to polar residues; sequence GTRSHTPAATQRR. The interval 242–261 is disordered; sequence GTRSHTPAATQRRGQGRGCG.

The protein operates within secondary metabolite biosynthesis. In terms of biological role, part of the gene cluster that mediates the biosynthesis of squalestatin S1 (SQS1, also known as zaragozic acid A), a heavily oxidized fungal polyketide that offers potent cholesterol lowering activity by targeting squalene synthase (SS). SQS1 is composed of a 2,8-dioxobicyclic[3.2.1]octane-3,4,5-tricarboxyclic acid core that is connected to two lipophilic polyketide arms. These initial steps feature the priming of an unusual benzoic acid starter unit onto the highly reducing polyketide synthase clz14, followed by oxaloacetate extension and product release to generate a tricarboxylic acid containing product. The phenylalanine ammonia lyase (PAL) clz10 and the acyl-CoA ligase clz12 are involved in transforming phenylalanine into benzoyl-CoA. The citrate synthase-like protein clz17 is involved in connecting the C-alpha-carbons of the hexaketide chain and oxaloacetate to afford the tricarboxylic acid unit. The potential hydrolytic enzymes, clz11 and clz13, are in close proximity to pks2 and may participate in product release. On the other side, the tetraketide arm is synthesized by a the squalestatin tetraketide synthase clz2 and enzymatically esterified to the core in the last biosynthetic step, by the acetyltransferase clz6. The biosynthesis of the tetraketide must involve 3 rounds of chain extension. After the first and second rounds methyl-transfer occurs, and in all rounds of extension the ketoreductase and dehydratase are active. The enoyl reductase and C-MeT of clz2 are not active in the final round of extension. The acetyltransferase clz6 appears to have a broad substrate selectivity for its acyl CoA substrate, allowing the in vitro synthesis of novel squalestatins. The biosynthesis of SQS1 requires several oxidative steps likely performed by oxidoreductases clz3, clz15 and clz16. Finally, in support of the identification of the cluster as being responsible for SQS1 production, the cluster contains a gene encoding a putative squalene synthase (SS) clz20, suggesting a likely mechanism for self-resistance. The polypeptide is Zaragozic acid A biosynthesis cluster protein 8 (Cochliobolus lunatus (Filamentous fungus)).